The primary structure comprises 703 residues: DNA ligase (703 aa).

A disordered region spans residues Met1 to Ala20. A compositionally biased stretch (low complexity) spans Ser9–Ala20. NAD(+) contacts are provided by residues Asp53–Asp57, Ser102–Ile103, and Glu139. The active-site N6-AMP-lysine intermediate is Lys141. Arg162, Glu200, Lys321, and Lys345 together coordinate NAD(+). Zn(2+) is bound by residues Cys439, Cys442, Cys457, and Cys463. A BRCT domain is found at Gln622–Arg703.

Belongs to the NAD-dependent DNA ligase family. LigA subfamily. It depends on Mg(2+) as a cofactor. The cofactor is Mn(2+).

It carries out the reaction NAD(+) + (deoxyribonucleotide)n-3'-hydroxyl + 5'-phospho-(deoxyribonucleotide)m = (deoxyribonucleotide)n+m + AMP + beta-nicotinamide D-nucleotide.. In terms of biological role, DNA ligase that catalyzes the formation of phosphodiester linkages between 5'-phosphoryl and 3'-hydroxyl groups in double-stranded DNA using NAD as a coenzyme and as the energy source for the reaction. It is essential for DNA replication and repair of damaged DNA. The chain is DNA ligase from Delftia acidovorans (strain DSM 14801 / SPH-1).